Reading from the N-terminus, the 309-residue chain is Olfactory receptor 2G3 (309 aa).

The Extracellular segment spans residues 1-25 (MGLGNESSLMDFILLGFSDHPRLEA). Asn-5 carries an N-linked (GlcNAc...) asparagine glycan. A helical transmembrane segment spans residues 26–49 (VLFVFVLFFYLLTLVGNFTIIIIS). Residues 50-57 (YLDPPLHT) lie on the Cytoplasmic side of the membrane. Residues 58 to 79 (PMYFFLSNLSLLDICFTTSLAP) form a helical membrane-spanning segment. Over 80–100 (QTLVNLQRPKKTITYGGCVAQ) the chain is Extracellular. A disulfide bond links Cys-97 and Cys-189. Residues 101 to 120 (LYISLALGSTECILLADMAL) traverse the membrane as a helical segment. Over 121–139 (DRYIAVCKPLHYVVIMNPR) the chain is Cytoplasmic. Residues 140–158 (LCQQLASISWLSGLASSLI) form a helical membrane-spanning segment. The Extracellular segment spans residues 159-195 (HATFTLQLPLCGNHRLDHFICEVPALLKLACVDTTVN). The helical transmembrane segment at 196–219 (ELVLFVVSVLFVVIPPALISISYG) threads the bilayer. At 220 to 236 (FITQAVLRIKSVEARHK) the chain is on the cytoplasmic side. A helical membrane pass occupies residues 237-259 (AFSTCSSHLTVVIIFYGTIIYVY). At 260–272 (LQPSDSYAQDQGK) the chain is on the extracellular side. The chain crosses the membrane as a helical span at residues 273–292 (FISLFYTMVTPTLNPIIYTL). At 293 to 309 (RNKDMKEALRKLLSGKL) the chain is on the cytoplasmic side.

It belongs to the G-protein coupled receptor 1 family.

The protein resides in the cell membrane. Its function is as follows. Odorant receptor. The chain is Olfactory receptor 2G3 (OR2G3) from Homo sapiens (Human).